Here is a 507-residue protein sequence, read N- to C-terminus: Histidine ammonia-lyase (507 aa).

A cross-link (5-imidazolinone (Ala-Gly)) is located at residues 141-143 (ASG). Ser-142 is modified (2,3-didehydroalanine (Ser)).

It belongs to the PAL/histidase family. In terms of processing, contains an active site 4-methylidene-imidazol-5-one (MIO), which is formed autocatalytically by cyclization and dehydration of residues Ala-Ser-Gly.

The protein localises to the cytoplasm. The enzyme catalyses L-histidine = trans-urocanate + NH4(+). It functions in the pathway amino-acid degradation; L-histidine degradation into L-glutamate; N-formimidoyl-L-glutamate from L-histidine: step 1/3. This chain is Histidine ammonia-lyase, found in Cereibacter sphaeroides (strain ATCC 17029 / ATH 2.4.9) (Rhodobacter sphaeroides).